The chain runs to 1174 residues: MNATDAESRKPENKPSSESSSSGSTSGSSDGEVSSKTYFKNNKSKVLSGQREVVLEVVRDLSYTICKEAEEKLVERFPRKDGSNEMLPKEDSINTNHNYTTDSNEHPVELTTKTEECKNTEKTKKKSFVRALSKDKQLSAYRSRSRSTRLSYSGHISRTHSVEKSLSRYKTSVLRNRRTSFGHGRDSSTTKRSVSRDKDNRLRRRIGSSRSHTRSHSRFRRSEKKLPSRSPRRIRSQERRHERRRSMSSDYERIALRRSEPIKRRDKDEFFKNNKKVSGDIKKGKGNDNGTVAELEAKITERQRKSLDILTSRTGGACLTPDKLRMIQAEITDKSSAAYQSIAREALKKYIHGYINKVNVDSVAVITRKLLKDNIVRGRGVLCHSIIQAQATSPTFTHVYAAMVAIINSKFPNIGELLLKRLVIQFKRAFGCNDKTVCLTSSHFIAHLVNQRVAHEILALEILTLLIESPTDDNVEVAITFLKECGMKLTEVSSDRVGGIFELLKNILHQGKLDKRVQYMIKVLFQVRRDGFKDHQSIIESLELVEEYAQFTHLLLLEDVTYPKDILNEFRFDDQYETNEEKYKALSKNILGSHASDSDGSFGSGSNSETALSDCDKGKNEVNDKYTSGDIIDETKPNLIALRRTIYLTLNSCLDYEECAQKLMKMQLKTCQQNEFCQILLDCCAEQRTYEKFYGLLTHRICKMNKSFIEPFKEIFKDICQTTHCLDTNRLRNISKFFAHLLFTDAISWDVLDCIKLTEDEAITSRCIFIKSFFQELVEYMGLYHFNKKLKTEVLAGTLAGLFPKDNPRNIRFSINFFTSIGLGGITNELCQLLKIAPKSAPSSSSSSSLSSELSAPSDDDSSSDSENKKKHKGKNKKMTKKKNPSKKKEKTKKIVGKNKIAAKNKTIKRRTDKDNSSSKDNFLKSESSSNESISLDSLSSELFAPSSYSSSESSNDSESKEKHKGKNKKMTKKKNPSNKREKTKKKLSKNKKAPNKNTKKRMTEKDISSSESSISESKSLNCSASNQNENEKRKKRVTSKSRTKRVKMFKQCQWVDADNQRDIKRKKRAEYRYEPLVYRKRNEECLKKGAPNCRKDNYGNRQNHEISQRHDSEIKRRREERKKRHHEKNHSREYKRSKLGLCQREYFLYMCCQFYYPCTFQCLCQNCHFTFYS.

Basic and acidic residues predominate over residues 1–15; sequence MNATDAESRKPENKP. Disordered stretches follow at residues 1 to 51, 80 to 109, and 136 to 259; these read MNAT…SGQR, KDGS…HPVE, and KQLS…LRRS. A compositionally biased stretch (low complexity) spans 16–35; it reads SSESSSSGSTSGSSDGEVSS. Polar residues predominate over residues 36 to 47; the sequence is KTYFKNNKSKVL. A compositionally biased stretch (basic and acidic residues) spans 80 to 92; the sequence is KDGSNEMLPKEDS. Residues 93 to 102 are compositionally biased toward polar residues; sequence INTNHNYTTD. The segment covering 138-153 has biased composition (low complexity); sequence LSAYRSRSRSTRLSYS. Residues 183-200 show a composition bias toward basic and acidic residues; it reads HGRDSSTTKRSVSRDKDN. Basic residues predominate over residues 201 to 223; sequence RLRRRIGSSRSHTRSHSRFRRSE. Over residues 235-259 the composition is skewed to basic and acidic residues; it reads RSQERRHERRRSMSSDYERIALRRS. In terms of domain architecture, MIF4G spans 348–531; the sequence is KKYIHGYINK…KVLFQVRRDG (184 aa). Over residues 597-608 the composition is skewed to low complexity; that stretch reads DSDGSFGSGSNS. Residues 597–616 form a disordered region; that stretch reads DSDGSFGSGSNSETALSDCD. Residues 641–757 form the MI domain; that stretch reads ALRRTIYLTL…SWDVLDCIKL (117 aa). Positions 840–857 are enriched in low complexity; it reads SAPSSSSSSSLSSELSAP. 2 disordered regions span residues 840 to 1045 and 1095 to 1133; these read SAPS…SRTK and RKDN…NHSR. Residues 869-909 show a composition bias toward basic residues; that stretch reads KKKHKGKNKKMTKKKNPSKKKEKTKKIVGKNKIAAKNKTIK. Residues 910–924 show a composition bias toward basic and acidic residues; sequence RRTDKDNSSSKDNFL. Over residues 926–957 the composition is skewed to low complexity; that stretch reads SESSSNESISLDSLSSELFAPSSYSSSESSND. The segment covering 963–1001 has biased composition (basic residues); that stretch reads KHKGKNKKMTKKKNPSNKREKTKKKLSKNKKAPNKNTKK. Positions 1010–1020 are enriched in low complexity; the sequence is SSESSISESKS. Residues 1034–1045 show a composition bias toward basic residues; that stretch reads RKKRVTSKSRTK. A compositionally biased stretch (basic and acidic residues) spans 1095–1118; it reads RKDNYGNRQNHEISQRHDSEIKRR. Residues 1119-1130 are compositionally biased toward basic residues; the sequence is REERKKRHHEKN.

This sequence belongs to the CWC22 family. In terms of assembly, component of the spliceosome C complex.

It localises to the nucleus speckle. Functionally, male determiner protein (M-factor) that controls male somatic sexual differentiation. Acts as a dominant factor that regulates the mRNA splicing of transformer (tra) and doublesex (dsx) transcripts and promotes expression of male splice forms of tra and dsx. Probably acts as a component of the spliceosome C complex required for mRNA splicing factor and exon-junction complex (EJC) assembly. Hinders eIF4AIII from non-specifically binding RNA and escorts it to the splicing machinery to promote EJC assembly on mature mRNAs. This is Male determiner protein Mdmd(II) from Musca domestica (House fly).